The following is a 476-amino-acid chain: MSYAKTQTQSKSGYQAGVKDYKLTYYTPDYIPKDTDLLAAFRMSPQPGVPPEEAGAAVAAESSTGTWTTVWTDLLTDLDRYKGRCYDIESVPGEDNQYICYVAYPLDLFEEGSVTNMLTSIVGNVFGFKALRSLRLEDLRIPVAYLKTFQGPPHGITVERDKLNKYGRPLLGCTIKPKLGLSAKNYGRAVYECLRGGLDFTKDDENINSQPFMRWRDRFLFAQEAIEKAQAETGEIKGHYLNVTAPTCEEMLERADFAKEIGTPIIMHDYLTGGFTANTTLAKWCRRNGVLLHIHRAMHAVIDRQKAHGIHFRVLAKCLRMSGGDHLHSGTVVGKLEGEKGITMGFVDLMREDHVEQDRERGIYFTQDWASMPGVMPVASGGIHVWHMPALVEIFGDDSCLQFGGGTLGHPWGNAPGATANRVALEACIQARNEGRNLFREGGDVIREAAKWSPDLAVACELWKEIKFEFEAMDTL.

Substrate is bound by residues N124 and T174. K176 (proton acceptor) is an active-site residue. Residue K178 coordinates substrate. The Mg(2+) site is built by K202, D204, and E205. Position 202 is an N6-carboxylysine (K202). Residue H295 is the Proton acceptor of the active site. Substrate is bound by residues R296, H328, and S380.

It belongs to the RuBisCO large chain family. Type I subfamily. Heterohexadecamer of 8 large chains and 8 small chains; disulfide-linked. The disulfide link is formed within the large subunit homodimers. Mg(2+) serves as cofactor. In terms of processing, the disulfide bond which can form in the large chain dimeric partners within the hexadecamer appears to be associated with oxidative stress and protein turnover.

The protein resides in the carboxysome. The enzyme catalyses 2 (2R)-3-phosphoglycerate + 2 H(+) = D-ribulose 1,5-bisphosphate + CO2 + H2O. It carries out the reaction D-ribulose 1,5-bisphosphate + O2 = 2-phosphoglycolate + (2R)-3-phosphoglycerate + 2 H(+). Functionally, ruBisCO catalyzes two reactions: the carboxylation of D-ribulose 1,5-bisphosphate, the primary event in carbon dioxide fixation, as well as the oxidative fragmentation of the pentose substrate in the photorespiration process. Both reactions occur simultaneously and in competition at the same active site. This is Ribulose bisphosphate carboxylase large chain from Trichodesmium erythraeum (strain IMS101).